Consider the following 117-residue polypeptide: Photosystem II reaction center Psb28 protein (117 aa).

The protein belongs to the Psb28 family. As to quaternary structure, part of the photosystem II complex.

It is found in the cellular thylakoid membrane. This chain is Photosystem II reaction center Psb28 protein, found in Prochlorococcus marinus (strain MIT 9211).